The chain runs to 334 residues: Formamidase (334 aa).

The 247-residue stretch at 14–260 folds into the CN hydrolase domain; sequence FLVAAIQFPV…WEIVTGEIYP (247 aa). Glutamate 60 functions as the Proton acceptor in the catalytic mechanism. Lysine 133 functions as the Proton donor in the catalytic mechanism. Catalysis depends on cysteine 166, which acts as the Nucleophile.

It belongs to the carbon-nitrogen hydrolase superfamily. Aliphatic amidase family.

The catalysed reaction is formamide + H2O = formate + NH4(+). Is an aliphatic amidase with a restricted substrate specificity, as it only hydrolyzes formamide. The sequence is that of Formamidase from Helicobacter pylori (strain HPAG1).